The following is a 119-amino-acid chain: Putative transmembrane protein ORF119 (119 aa).

3 helical membrane passes run 9-29 (TLAI…PAMV), 73-93 (QYAG…SIFT), and 95-115 (PIAL…AFYY).

The protein localises to the host membrane. The protein is Putative transmembrane protein ORF119 of Acidianus convivator (ATV).